The chain runs to 266 residues: Putative hydro-lyase VF_1377 (266 aa).

It belongs to the D-glutamate cyclase family.

The polypeptide is Putative hydro-lyase VF_1377 (Aliivibrio fischeri (strain ATCC 700601 / ES114) (Vibrio fischeri)).